We begin with the raw amino-acid sequence, 536 residues long: Arylsulfatase K (536 aa).

The N-terminal stretch at 1–22 (MLLLWVSVVAALALAVLAPGAG) is a signal peptide. The Ca(2+) site is built by Asp-40 and Cys-80. Cys-80 functions as the Nucleophile in the catalytic mechanism. At Cys-80 the chain carries 3-oxoalanine (Cys). N-linked (GlcNAc...) asparagine glycosylation occurs at Asn-108. Lys-128 provides a ligand contact to substrate. N-linked (GlcNAc...) asparagine glycosylation is found at Asn-166 and Asn-193. His-251 provides a ligand contact to substrate. N-linked (GlcNAc...) asparagine glycosylation is present at Asn-262. Positions 313 and 314 each coordinate Ca(2+). Asn-375, Asn-413, and Asn-498 each carry an N-linked (GlcNAc...) asparagine glycan.

Belongs to the sulfatase family. It depends on Ca(2+) as a cofactor. In terms of processing, the conversion to 3-oxoalanine (also known as C-formylglycine, FGly), of a serine or cysteine residue in prokaryotes and of a cysteine residue in eukaryotes, is critical for catalytic activity. Post-translationally, the 75-kDa precursor undergoes proteolytic processing to yield a 23 kDa form. N-glycosylated with both high mannose and complex type sugars. Expressed at high levels in the placenta and pancreas. Expressed at intermediate levels in the lung, brain, heart, liver and kidney and at low levels in the muscle.

The protein localises to the secreted. It localises to the lysosome. The enzyme catalyses an aryl sulfate + H2O = a phenol + sulfate + H(+). The catalysed reaction is Hydrolysis of the 2-sulfate groups of the 2-O-sulfo-D-glucuronate residues of chondroitin sulfate, heparin and heparitin sulfate.. In terms of biological role, catalyzes the hydrolysis of pseudosubstrates such as p-nitrocatechol sulfate and p-nitrophenyl sulfate. Catalyzes the hydrolysis of the 2-sulfate groups of the 2-O-sulfo-D-glucuronate residues of chondroitin sulfate, heparin and heparitin sulfate. Acts selectively on 2-sulfoglucuronate and lacks activity against 2-sulfoiduronate. In Homo sapiens (Human), this protein is Arylsulfatase K (ARSK).